Consider the following 194-residue polypeptide: Putative manganese efflux pump MntP (194 aa).

6 helical membrane-spanning segments follow: residues 3-23 (FYATIILALALSMDAFAVAVC), 40-60 (GFIFGIIEASTPIIGWALGLY), 65-85 (IIQWDHWVAFGLLVILGGRMI), 109-129 (LIATGIATSLDAMAIGVGLAF), 134-154 (IVHTAMTIGMMTMIMATLGML), and 169-189 (IIGGMVLIAIGFNILFEHLDL).

The protein belongs to the MntP (TC 9.B.29) family.

Its subcellular location is the cell inner membrane. In terms of biological role, probably functions as a manganese efflux pump. The protein is Putative manganese efflux pump MntP of Proteus mirabilis (strain HI4320).